Reading from the N-terminus, the 82-residue chain is Large ribosomal subunit protein bL31B (82 aa).

The protein belongs to the bacterial ribosomal protein bL31 family. Type B subfamily. In terms of assembly, part of the 50S ribosomal subunit.

The polypeptide is Large ribosomal subunit protein bL31B (Pectobacterium atrosepticum (strain SCRI 1043 / ATCC BAA-672) (Erwinia carotovora subsp. atroseptica)).